We begin with the raw amino-acid sequence, 366 residues long: Class I histocompatibility antigen, Gogo-C*0202 alpha chain (366 aa).

A signal peptide spans 1–24 (MRVMAPRTLILLLSGALALTETWA). An alpha-1 region spans residues 25 to 114 (GSHSMRYFYT…LRGYYNQSED (90 aa)). Topologically, residues 25 to 308 (GSHSMRYFYT…EPSSQPTIPI (284 aa)) are extracellular. Residue Asn-110 is glycosylated (N-linked (GlcNAc...) asparagine). Residues 115-206 (GSHTLQSMYG…ENGKETLQRA (92 aa)) form an alpha-2 region. 2 disulfides stabilise this stretch: Cys-125–Cys-188 and Cys-227–Cys-283. The interval 207-298 (EPPKTHVTHH…GLPEPLTLRW (92 aa)) is alpha-3. The region spanning 209–297 (PKTHVTHHPL…EGLPEPLTLR (89 aa)) is the Ig-like C1-type domain. The segment at 299–308 (EPSSQPTIPI) is connecting peptide. A helical transmembrane segment spans residues 309–332 (VGIVVGLAVLVVLAVLGAVVTAMM). Residues 333–366 (CRRKSSGGKGGSCSQAACSNSAQGSDESLITCKA) are Cytoplasmic-facing.

This sequence belongs to the MHC class I family. Heterodimer of an alpha chain and a beta chain (beta-2-microglobulin).

The protein resides in the membrane. Functionally, involved in the presentation of foreign antigens to the immune system. This chain is Class I histocompatibility antigen, Gogo-C*0202 alpha chain, found in Gorilla gorilla gorilla (Western lowland gorilla).